Consider the following 195-residue polypeptide: GTP-dependent dephospho-CoA kinase (195 aa).

5 residues coordinate GTP: Asp49, Val50, Asp68, Glu127, and Asp150.

This sequence belongs to the GTP-dependent DPCK family.

The catalysed reaction is 3'-dephospho-CoA + GTP = GDP + CoA + H(+). Its pathway is cofactor biosynthesis; coenzyme A biosynthesis. In terms of biological role, catalyzes the GTP-dependent phosphorylation of the 3'-hydroxyl group of dephosphocoenzyme A to form coenzyme A (CoA). The protein is GTP-dependent dephospho-CoA kinase of Methanosarcina barkeri (strain Fusaro / DSM 804).